We begin with the raw amino-acid sequence, 276 residues long: Bis(5'-nucleosyl)-tetraphosphatase, symmetrical (276 aa).

It belongs to the Ap4A hydrolase family.

It carries out the reaction P(1),P(4)-bis(5'-adenosyl) tetraphosphate + H2O = 2 ADP + 2 H(+). Its function is as follows. Hydrolyzes diadenosine 5',5'''-P1,P4-tetraphosphate to yield ADP. The chain is Bis(5'-nucleosyl)-tetraphosphatase, symmetrical from Tolumonas auensis (strain DSM 9187 / NBRC 110442 / TA 4).